We begin with the raw amino-acid sequence, 147 residues long: Hemoglobin subunit delta (147 aa).

Residues 3–147 (HLTPDEKNAV…VATALAHKYH (145 aa)) enclose the Globin domain. S51 bears the Phosphoserine mark. Heme b-binding residues include H64 and H93.

The protein belongs to the globin family. As to quaternary structure, heterotetramer of two delta chains and two alpha chains. In terms of tissue distribution, red blood cells.

The sequence is that of Hemoglobin subunit delta (HBD) from Otolemur crassicaudatus (Brown greater galago).